Reading from the N-terminus, the 653-residue chain is Protein fem-1 homolog A (653 aa).

ANK repeat units follow at residues 2-31 (DLHT…REEL), 40-70 (SGGT…SVEA), 82-111 (EGAP…SVNR), 115-145 (TNST…DLEV), 149-178 (HGHT…QVNR), 182-211 (KGNT…RMER), and 214-243 (YGMT…AGDE). S108 carries the phosphoserine modification. Positions 242-274 (DEQAQPGLARVQPQGARSSPEEPPSGESYESCC) are disordered. 2 TPR repeats span residues 282 to 316 (VEAL…RHQG) and 374 to 407 (SYYI…QQNN). ANK repeat units lie at residues 518–560 (NGFT…DPDS) and 564–593 (DNNT…HMDA).

This sequence belongs to the fem-1 family. In terms of assembly, component of a CRL2 E3 ubiquitin-protein ligase complex, also named ECS (Elongin BC-CUL2/5-SOCS-box protein) complex, composed of CUL2, Elongin BC (ELOB and ELOC), RBX1 and substrate-specific adapter FEM1A. Interacts with PTGER4. Interacts with NFKB1; the interaction is direct. Phosphorylated; highly phosphorylated in myoblasts and myotubes. Phosphorylation at Ser-108 promotes PGE2-EP4-mediated inhibition of inflammation. Dephosphorylated by protein phosphatase 2A (PP2A).

Its subcellular location is the mitochondrion. The protein resides in the cytoplasm. It functions in the pathway protein modification; protein ubiquitination. Functionally, substrate-recognition component of a Cul2-RING (CRL2) E3 ubiquitin-protein ligase complex of the DesCEND (destruction via C-end degrons) pathway, which recognizes a C-degron located at the extreme C terminus of target proteins, leading to their ubiquitination and degradation. The C-degron recognized by the DesCEND pathway is usually a motif of less than ten residues and can be present in full-length proteins, truncated proteins or proteolytically cleaved forms. The CRL2(FEM1A) complex specifically recognizes proteins with an arginine at the C-terminus: recognizes and binds proteins ending with -Lys/Arg-Xaa-Arg and -Lys/Arg-Xaa-Xaa-Arg C-degrons, such as SIL1 or OR51B2, leading to their ubiquitination and degradation. Involved in PGE2-EP4-mediated inhibition of inflammation of macrophages via interaction with NFKB1 and PTGER4. Promotes inflammation in brain microglia through MAP2K4/MKK4-mediated signaling. The polypeptide is Protein fem-1 homolog A (Bos taurus (Bovine)).